The sequence spans 89 residues: Phosphoribulokinase, chloroplastic (89 aa).

Positions L1–L22 are disordered.

The protein belongs to the phosphoribulokinase family.

It localises to the plastid. The protein localises to the chloroplast. It carries out the reaction D-ribulose 5-phosphate + ATP = D-ribulose 1,5-bisphosphate + ADP + H(+). The protein operates within carbohydrate biosynthesis; Calvin cycle. With respect to regulation, light regulated via thioredoxin by reversible oxidation/reduction of sulfhydryl/disulfide groups. The polypeptide is Phosphoribulokinase, chloroplastic (Vitis sp. (Grape)).